The primary structure comprises 913 residues: WD repeat-containing protein 44 (913 aa).

Over residues 1-14 (MASESDTEEFYDAP) the composition is skewed to acidic residues. Residues 1–24 (MASESDTEEFYDAPEDVHLGGGYP) are disordered. Ala-2 carries the N-acetylalanine modification. Residues 2 to 170 (ASESDTEEFY…SSTEQLNVLE (169 aa)) are binding activity. Phosphoserine is present on Ser-3. Positions 9-15 (EFYDAPE) match the FFAT-like motif motif. Residue Tyr-11 is modified to Phosphotyrosine. Ser-27, Ser-50, Ser-66, Ser-71, Ser-81, Ser-96, and Ser-126 each carry phosphoserine. Residues 119–184 (EESQKAESQN…VLNKEAVEVK (66 aa)) are a coiled coil. Phosphothreonine occurs at positions 158 and 219. The tract at residues 205–348 (AVEEVAPAKP…RPRSNSGREL (144 aa)) is disordered. Positions 211–257 (PAKPPRHLTPEPDIVASTKKPVPARPPPPTNFPPPRPPPPSRPAPPP) are important for interaction with ARHGAP26 AND ARHGAP10. Positions 233–256 (PARPPPPTNFPPPRPPPPSRPAPP) are enriched in pro residues. The residue at position 262 (Ser-262) is a Phosphoserine. Basic and acidic residues predominate over residues 262 to 278 (SELEFETLKTPDIDVPK). Residue Thr-271 is modified to Phosphothreonine. The segment covering 280-311 (NITSDSLLTASMASESTVKDSQPSLDLASATS) has biased composition (polar residues). The interval 334–347 (VMGPQRPRSNSGRE) is important for interaction with RAB11A. Phosphoserine; by PKB/AKT1 is present on residues Ser-342 and Ser-344. Thr-349 bears the Phosphothreonine mark. Disordered stretches follow at residues 397 to 424 (SNDA…LKQK) and 459 to 480 (DEVF…MPYT). Phosphoserine is present on residues Ser-403, Ser-470, Ser-471, and Ser-472. Residues 467–476 (DDPSSSDDEG) are compositionally biased toward acidic residues. At Tyr-479 the chain carries Phosphotyrosine. Residues 509–548 (EHMGAVWTMKFSHCGRLLASAGQDNVVRIWALKNAFDYFN) form a WD 1 repeat. Positions 557-593 (EGRVSPSPSQESLSSSKSDTDTGVCSGTDEDPDDKNA) are disordered. 2 positions are modified to phosphoserine: Ser-561 and Ser-565. Residues 561 to 573 (SPSPSQESLSSSK) are compositionally biased toward low complexity. 6 WD repeats span residues 605-643 (GHTA…CLCC), 645-685 (QHID…VALW), 690-729 (GQTK…YHTQ), 740-779 (KVGR…LSMK), 784-823 (VNSS…SKFT), and 876-913 (VLDA…KNVS).

As to quaternary structure, interacts with the GTP-bound form of RAB11A and RAB11B. Interacts with GRAF1/ARHGAP26 or GRAF2/ARHGAP10; the interaction connects the endoplasmic reticulum (ER) with the endosomal tubule. Interacts (via FFAT-like motif) with VAPA (via MSP domain) or VAPB (via MSP domain); the interaction connects the ER with the endosomal tubule. Does not bind to RAB7, RAB10, RAB14, RAB35 and RAB8A. In terms of processing, phosphorylated by ATK1; the phosphorylation stabilizes its interaction with RAB11A and RAB11B.

The protein resides in the cytoplasm. Its subcellular location is the cytosol. It localises to the perinuclear region. It is found in the endosome membrane. The protein localises to the golgi apparatus. The protein resides in the trans-Golgi network. Downstream effector for Rab11 which regulates Rab11 intracellular membrane trafficking functions such as endocytic recycling, intracellular ciliogenesis and protein export. ATK1-mediated phosphorylation of WDR44 induces binding to Rab11 which activates endocytic recycling of transferrin receptor back to the plasma membrane. When bound to Rab11, prevents the formation of the ciliogenic Rab11-Rabin8/RAB3IP-RAB11FIP3 complex, therefore inhibiting preciliary trafficking and ciliogenesis. Participates in neo-synthesized protein export by connecting the endoplasmic reticulum (ER) with the endosomal tubule via direct interactions with the integral ER proteins VAPA or VAPB and the endosomal protein GRAFs (GRAF1/ARHGAP26 or GRAF2/ARHGAP10), which facilitates the transfer of proteins such as E-cadherin, MPP14 and CFTR into a Rab8-Rab10-Rab11-dependent export route. The chain is WD repeat-containing protein 44 from Homo sapiens (Human).